Here is a 461-residue protein sequence, read N- to C-terminus: Bifunctional protein GlmU (461 aa).

The segment at 1-230 (MSKIHAVVLA…PEETLGVNDR (230 aa)) is pyrophosphorylase. UDP-N-acetyl-alpha-D-glucosamine is bound by residues 9 to 12 (LAAG), Lys-23, Gln-73, 78 to 79 (GT), 101 to 103 (YGD), Gly-140, Glu-155, Asn-170, and Asn-228. Asp-103 serves as a coordination point for Mg(2+). Asn-228 contributes to the Mg(2+) binding site. Residues 231 to 251 (VQLSEAEAYMKKRIMTGHMRN) are linker. Residues 252–461 (GVTIIDPTST…KMPRKGKKQS (210 aa)) form an N-acetyltransferase region. 2 residues coordinate UDP-N-acetyl-alpha-D-glucosamine: Arg-333 and Lys-351. His-363 (proton acceptor) is an active-site residue. UDP-N-acetyl-alpha-D-glucosamine is bound by residues Tyr-366 and Asn-377. Acetyl-CoA is bound by residues 386–387 (NY), Ala-423, and Arg-440.

This sequence in the N-terminal section; belongs to the N-acetylglucosamine-1-phosphate uridyltransferase family. It in the C-terminal section; belongs to the transferase hexapeptide repeat family. As to quaternary structure, homotrimer. The cofactor is Mg(2+).

The protein resides in the cytoplasm. It carries out the reaction alpha-D-glucosamine 1-phosphate + acetyl-CoA = N-acetyl-alpha-D-glucosamine 1-phosphate + CoA + H(+). It catalyses the reaction N-acetyl-alpha-D-glucosamine 1-phosphate + UTP + H(+) = UDP-N-acetyl-alpha-D-glucosamine + diphosphate. It functions in the pathway nucleotide-sugar biosynthesis; UDP-N-acetyl-alpha-D-glucosamine biosynthesis; N-acetyl-alpha-D-glucosamine 1-phosphate from alpha-D-glucosamine 6-phosphate (route II): step 2/2. It participates in nucleotide-sugar biosynthesis; UDP-N-acetyl-alpha-D-glucosamine biosynthesis; UDP-N-acetyl-alpha-D-glucosamine from N-acetyl-alpha-D-glucosamine 1-phosphate: step 1/1. The protein operates within bacterial outer membrane biogenesis; LPS lipid A biosynthesis. Catalyzes the last two sequential reactions in the de novo biosynthetic pathway for UDP-N-acetylglucosamine (UDP-GlcNAc). The C-terminal domain catalyzes the transfer of acetyl group from acetyl coenzyme A to glucosamine-1-phosphate (GlcN-1-P) to produce N-acetylglucosamine-1-phosphate (GlcNAc-1-P), which is converted into UDP-GlcNAc by the transfer of uridine 5-monophosphate (from uridine 5-triphosphate), a reaction catalyzed by the N-terminal domain. This is Bifunctional protein GlmU from Brevibacillus brevis (strain 47 / JCM 6285 / NBRC 100599).